Consider the following 78-residue polypeptide: NEDD8-like protein RUB3 (78 aa).

G76 participates in a covalent cross-link: Glycyl lysine isopeptide (Gly-Lys) (interchain with K-? in acceptor proteins). Residues 77–78 constitute a propeptide that is removed on maturation; it reads CC.

In terms of tissue distribution, detected in stems and flower buds, but not in leaves, mature flowers and seedlings.

Functionally, may function as a stable post-translational protein modifier. This Arabidopsis thaliana (Mouse-ear cress) protein is NEDD8-like protein RUB3 (RUB3).